The following is a 448-amino-acid chain: N-succinylarginine dihydrolase (448 aa).

Residues 19–28 (AGLSSGNIAS), N110, and 137–138 (HR) contribute to the substrate site. The active site involves E174. R216 contributes to the substrate binding site. H252 is an active-site residue. Substrate contacts are provided by D254 and N366. The active-site Nucleophile is the C372.

Belongs to the succinylarginine dihydrolase family. As to quaternary structure, homodimer.

The enzyme catalyses N(2)-succinyl-L-arginine + 2 H2O + 2 H(+) = N(2)-succinyl-L-ornithine + 2 NH4(+) + CO2. The protein operates within amino-acid degradation; L-arginine degradation via AST pathway; L-glutamate and succinate from L-arginine: step 2/5. In terms of biological role, catalyzes the hydrolysis of N(2)-succinylarginine into N(2)-succinylornithine, ammonia and CO(2). In Legionella pneumophila (strain Lens), this protein is N-succinylarginine dihydrolase.